The chain runs to 335 residues: Biotin synthase (335 aa).

A Radical SAM core domain is found at 46-274 (YNIQLASLFS…KSKIRLSAGR (229 aa)). [4Fe-4S] cluster contacts are provided by Cys-61, Cys-65, and Cys-68. Residues Cys-105, Cys-137, Cys-197, and Arg-269 each contribute to the [2Fe-2S] cluster site.

The protein belongs to the radical SAM superfamily. Biotin synthase family. As to quaternary structure, homodimer. [4Fe-4S] cluster is required as a cofactor. [2Fe-2S] cluster serves as cofactor.

The catalysed reaction is (4R,5S)-dethiobiotin + (sulfur carrier)-SH + 2 reduced [2Fe-2S]-[ferredoxin] + 2 S-adenosyl-L-methionine = (sulfur carrier)-H + biotin + 2 5'-deoxyadenosine + 2 L-methionine + 2 oxidized [2Fe-2S]-[ferredoxin]. The protein operates within cofactor biosynthesis; biotin biosynthesis; biotin from 7,8-diaminononanoate: step 2/2. Its function is as follows. Catalyzes the conversion of dethiobiotin (DTB) to biotin by the insertion of a sulfur atom into dethiobiotin via a radical-based mechanism. This is Biotin synthase from Prochlorococcus marinus (strain MIT 9312).